Reading from the N-terminus, the 668-residue chain is MSAKTVVFAYHDIGCAGIQALLDSGYDIAAVFTHAHDPKENTFYASVAQLCANNGIAVHAPEDANHPLWIERIAKLDPDYIFSFYYRNLLSEPLLALAKKGAFNLHGSLLPRYRGRAPANWVLVNGETETGVTLHRMVKRADAGAIVAQQRVAIERSDTALSLHGKLRTAASDLLRDALPAMLQGRITETPQDESKATVFGRRTPADGKLVWAQPAEKLFNLVRAVTQPYPGAFCAVGEHKLIVWSAEVVKGNEGQAPGRVISVDPLRIACGEDSLVINAGQRNDNGLYLSGPQLANELGLVDGSLLRGAESGRGPRRTRVLILGVNGFIGNHLSERLLRDERYEVYGLDIGSDAIDRLRSHPRFHFVEGDISIHSEWIEYHIKKCDVVLPLVAIATPIEYTRNPLRVFELDFEENLKLVRYCVKYNKRVIFPSTSEVYGMCQDKHFDEDRSNLIVGPINKQRWIYSVSKQLLDRVIWAYGAKGLNFTLFRPFNWMGPRLDRLDSARIGSSRAITQLILNLVEGTPIRLFDGGEQKRCFTDIADGVEALARIIDNDNDVCNGQIINIGNPDNEASIRQLGEELLRQFEAHPLRSNFPPFAGFRDVESKAFYGAGYQDVEHRKPSIANAKRLLDWTPTVEMRETIGNTLDFFLREAMLEIERPSNKEAC.

The formyltransferase ArnAFT stretch occupies residues 1-307; sequence MSAKTVVFAY…ELGLVDGSLL (307 aa). His-106 acts as the Proton donor; for formyltransferase activity in catalysis. Residues Arg-116 and 138–142 each bind (6R)-10-formyltetrahydrofolate; that span reads VKRAD. Residues 317 to 668 are dehydrogenase ArnADH; it reads RRTRVLILGV…IERPSNKEAC (352 aa). NAD(+) is bound by residues Asp-350 and 371-372; that span reads DI. UDP-alpha-D-glucuronate-binding positions include Ala-396, Tyr-401, and 435 to 436; that span reads TS. Glu-437 (proton acceptor; for decarboxylase activity) is an active-site residue. UDP-alpha-D-glucuronate is bound by residues Arg-463, Asn-494, 528-537, and Tyr-615; that span reads RLFDGGEQKR. Arg-621 serves as the catalytic Proton donor; for decarboxylase activity.

This sequence in the N-terminal section; belongs to the Fmt family. UDP-L-Ara4N formyltransferase subfamily. The protein in the C-terminal section; belongs to the NAD(P)-dependent epimerase/dehydratase family. UDP-glucuronic acid decarboxylase subfamily. In terms of assembly, homohexamer, formed by a dimer of trimers.

It catalyses the reaction UDP-alpha-D-glucuronate + NAD(+) = UDP-beta-L-threo-pentopyranos-4-ulose + CO2 + NADH. The catalysed reaction is UDP-4-amino-4-deoxy-beta-L-arabinose + (6R)-10-formyltetrahydrofolate = UDP-4-deoxy-4-formamido-beta-L-arabinose + (6S)-5,6,7,8-tetrahydrofolate + H(+). It participates in nucleotide-sugar biosynthesis; UDP-4-deoxy-4-formamido-beta-L-arabinose biosynthesis; UDP-4-deoxy-4-formamido-beta-L-arabinose from UDP-alpha-D-glucuronate: step 1/3. The protein operates within nucleotide-sugar biosynthesis; UDP-4-deoxy-4-formamido-beta-L-arabinose biosynthesis; UDP-4-deoxy-4-formamido-beta-L-arabinose from UDP-alpha-D-glucuronate: step 3/3. Its pathway is bacterial outer membrane biogenesis; lipopolysaccharide biosynthesis. Bifunctional enzyme that catalyzes the oxidative decarboxylation of UDP-glucuronic acid (UDP-GlcUA) to UDP-4-keto-arabinose (UDP-Ara4O) and the addition of a formyl group to UDP-4-amino-4-deoxy-L-arabinose (UDP-L-Ara4N) to form UDP-L-4-formamido-arabinose (UDP-L-Ara4FN). The modified arabinose is attached to lipid A and is required for resistance to polymyxin and cationic antimicrobial peptides. The sequence is that of Bifunctional polymyxin resistance protein ArnA from Pseudomonas fluorescens (strain Pf0-1).